The following is a 365-amino-acid chain: Eukaryotic translation initiation factor 3 subunit H (365 aa).

The MPN domain occupies 15–166 (ILLDSLVVMK…LRAWRLSTAA (152 aa)).

The protein belongs to the eIF-3 subunit H family. In terms of assembly, component of the eukaryotic translation initiation factor 3 (eIF-3) complex.

It localises to the cytoplasm. Component of the eukaryotic translation initiation factor 3 (eIF-3) complex, which is involved in protein synthesis of a specialized repertoire of mRNAs and, together with other initiation factors, stimulates binding of mRNA and methionyl-tRNAi to the 40S ribosome. The eIF-3 complex specifically targets and initiates translation of a subset of mRNAs involved in cell proliferation. The protein is Eukaryotic translation initiation factor 3 subunit H of Caenorhabditis elegans.